The following is a 62-amino-acid chain: Alpha-conotoxin ViIA (62 aa).

A signal peptide spans 1–18 (MGMRMMFVVFLLVVFASS). The propeptide occupies 19 to 45 (VTLDRASYGRYASPVDRASALIAQAIL). 2 cysteine pairs are disulfide-bonded: C48–C54 and C49–C61.

It belongs to the conotoxin A superfamily. In terms of processing, the toxin is inactive on the alpha-3-beta-2 nAChR when the disulfide bond connectivity is C1-C4 and C2-C3 (ViIA-I) (IC(50)&gt;10000 nM). In terms of tissue distribution, expressed by the venom duct.

The protein resides in the secreted. Alpha-conotoxins act on postsynaptic membranes, they bind to the nicotinic acetylcholine receptors (nAChR) and thus inhibit them. This toxin selectively inhibits nicotinic acetylcholine receptor (nAChR) alpha-3-beta-2 subtype (IC(50)=845.5 nM). This chain is Alpha-conotoxin ViIA, found in Conus virgo (Virgin cone).